Consider the following 700-residue polypeptide: MNPIVKSFEYGQHTVTLETGVIARQADAAVLASMGDTTVLVTVVGKKEADAGRDFFPLTVNYQEKTYAAGKIPGGFFKREGRPSEDETLIARLIDRPIRPLFPNGFKNEVQVIITVVSVDPQIEPDIISMIGTSAALAISGIPFSGPLGAARVGYIDGEYVLNPSVAQLATSQLNLVVAGTAGAVLMVESEAQALPEEVMLGSVVYGHDQQQVVIKAIAEFKAEAGKPTWDWTAPTQDADLVAQIKELAEAGLGDAYKIQVKQDRYAQVSVVKAATKEALLASNPSIDLREVDNLLGSLEKKVVRGRIIRGEPRIDGREPDMIRALSVLAGVLPRTHGSALFTRGETQALVTCTLGTERDAQKIDSIMGERTNRFMLHYNFPPYSVGETGMVGSPKRREIGHGKLAWRGINAVMPSAAEFPYSVRVVSEITESNGSSSMASVCGTSLALMDAGVPIKTSVAGIAMGLVKEGDDFVVLSDILGDEDHLGDMDFKVAGTRDGITALQMDIKIEGITKEIMDIALQQAYGARVHILNVMDQAIGSHRDDISDHAPRITVIKINPEKIRDVIGKGGAVIRALTEETGTTIELEDDGTVKIASSNGEATKEAIRRIEEITSEVEVGRIYNGKVIRIVDFGAFVNILPGKDGLVHISQISDERVANVSDHLELNQEVAVKVMEVDRQGRVRLSIKEAQTKETAAAE.

2 residues coordinate Mg(2+): D485 and D491. In terms of domain architecture, KH spans P552–I611. Residues G621–K689 form the S1 motif domain.

Belongs to the polyribonucleotide nucleotidyltransferase family. Component of the RNA degradosome, which is a multiprotein complex involved in RNA processing and mRNA degradation. Mg(2+) serves as cofactor.

It localises to the cytoplasm. It carries out the reaction RNA(n+1) + phosphate = RNA(n) + a ribonucleoside 5'-diphosphate. Involved in mRNA degradation. Catalyzes the phosphorolysis of single-stranded polyribonucleotides processively in the 3'- to 5'-direction. This chain is Polyribonucleotide nucleotidyltransferase, found in Shewanella baltica (strain OS155 / ATCC BAA-1091).